The chain runs to 323 residues: Viral cathepsin (323 aa).

The first 16 residues, 1–16 (MNKILFYLFVYGVVNS), serve as a signal peptide directing secretion. A propeptide spans 17–112 (AAYDLLKAPN…IVLDQPPGKG (96 aa)) (activation peptide). Cystine bridges form between Cys133–Cys174, Cys167–Cys207, and Cys262–Cys310. Cys136 is a catalytic residue. A glycan (N-linked (GlcNAc...) asparagine; by host) is linked at Asn158. Catalysis depends on residues His269 and Asn289.

The protein belongs to the peptidase C1 family. Synthesized as an inactive proenzyme and activated by proteolytic removal of the inhibitory propeptide.

The enzyme catalyses Endopeptidase of broad specificity, hydrolyzing substrates of both cathepsin L and cathepsin B.. Its function is as follows. Cysteine protease that plays an essential role in host liquefaction to facilitate horizontal transmission of the virus. May participate in the degradation of foreign protein expressed by the baculovirus system. The sequence is that of Viral cathepsin (VCATH) from Helicoverpa zea (Corn earworm moth).